The following is a 513-amino-acid chain: ATP synthase subunit alpha (513 aa).

An ATP-binding site is contributed by 169 to 176; that stretch reads GDRQTGKT.

This sequence belongs to the ATPase alpha/beta chains family. As to quaternary structure, F-type ATPases have 2 components, CF(1) - the catalytic core - and CF(0) - the membrane proton channel. CF(1) has five subunits: alpha(3), beta(3), gamma(1), delta(1), epsilon(1). CF(0) has three main subunits: a(1), b(2) and c(9-12). The alpha and beta chains form an alternating ring which encloses part of the gamma chain. CF(1) is attached to CF(0) by a central stalk formed by the gamma and epsilon chains, while a peripheral stalk is formed by the delta and b chains.

The protein localises to the cell inner membrane. The catalysed reaction is ATP + H2O + 4 H(+)(in) = ADP + phosphate + 5 H(+)(out). Its function is as follows. Produces ATP from ADP in the presence of a proton gradient across the membrane. The alpha chain is a regulatory subunit. This Yersinia pseudotuberculosis serotype O:1b (strain IP 31758) protein is ATP synthase subunit alpha.